We begin with the raw amino-acid sequence, 257 residues long: MAENTVNAINVDPSEVEKFNKLAGEWWNKTGAFATLHEINPLRLNWIEENVKCGYVSADHQKTAEMGLAGKKVLDVGCGGGILSEAMARRGADVTGIDLGTENLKAASLHAEQSNLQDTLRYQHIPVEALAATHAGQFDVVTCMEMLEHVPDPAAIVDACFKLLAPGGVCVLSTINRNPKSYLFAIVGAEYVLRLLDRGTHDYAKFITPAELDKMAIDAGFTRQDIIGLHYNPLTKRYWLAQNVDVNYMMAVQKPRA.

S-adenosyl-L-methionine is bound by residues R43, G77, D98, and M144.

This sequence belongs to the methyltransferase superfamily. UbiG/COQ3 family.

The enzyme catalyses a 3-demethylubiquinol + S-adenosyl-L-methionine = a ubiquinol + S-adenosyl-L-homocysteine + H(+). It carries out the reaction a 3-(all-trans-polyprenyl)benzene-1,2-diol + S-adenosyl-L-methionine = a 2-methoxy-6-(all-trans-polyprenyl)phenol + S-adenosyl-L-homocysteine + H(+). Its pathway is cofactor biosynthesis; ubiquinone biosynthesis. In terms of biological role, O-methyltransferase that catalyzes the 2 O-methylation steps in the ubiquinone biosynthetic pathway. The protein is Ubiquinone biosynthesis O-methyltransferase of Psychrobacter arcticus (strain DSM 17307 / VKM B-2377 / 273-4).